The chain runs to 338 residues: Protein REG2 (338 aa).

The disordered stretch occupies residues 1–21 (MTLSNCDSLDNLFQDPPEEEE).

Regulatory subunit, binds to type-1 protein phosphatase. Functions with HEX2/REG1 and SNF1 protein kinase to regulate growth. Might regulate SNF1 directly or indirectly. The chain is Protein REG2 (REG2) from Saccharomyces cerevisiae (strain ATCC 204508 / S288c) (Baker's yeast).